A 157-amino-acid polypeptide reads, in one-letter code: Endoribonuclease YbeY (157 aa).

The Zn(2+) site is built by His-123, His-127, and His-133.

This sequence belongs to the endoribonuclease YbeY family. The cofactor is Zn(2+).

It is found in the cytoplasm. Functionally, single strand-specific metallo-endoribonuclease involved in late-stage 70S ribosome quality control and in maturation of the 3' terminus of the 16S rRNA. In Desulfitobacterium hafniense (strain Y51), this protein is Endoribonuclease YbeY.